The following is a 493-amino-acid chain: Probable GTP-binding protein OBGM, mitochondrial (493 aa).

The transit peptide at 1-28 (MWLIRAIVPVRYLGSYKRPQKPPWMRNP) directs the protein to the mitochondrion. The region spanning 48 to 303 (TRMRDRFTLY…AVLILELKSI (256 aa)) is the Obg domain. 2 disordered regions span residues 65-89 (SGCS…GGRG) and 146-215 (GEIP…EDDD). Residues 187-196 (SESDQDDTEQ) are compositionally biased toward acidic residues. The OBG-type G domain occupies 304–476 (ADVGLVGMPN…LKDGLKMLVD (173 aa)). GTP-binding positions include 310–317 (GMPNAGKS) and 356–360 (DIPGL).

The protein belongs to the TRAFAC class OBG-HflX-like GTPase superfamily. OBG GTPase family.

Its subcellular location is the mitochondrion. Functionally, may bind GTP and have GTPase activity. The protein is Probable GTP-binding protein OBGM, mitochondrial (ATOBGM) of Arabidopsis thaliana (Mouse-ear cress).